The sequence spans 306 residues: Ribosomal RNA small subunit methyltransferase H (306 aa).

S-adenosyl-L-methionine is bound by residues 33-35 (GGY), Asp51, Phe78, Asp96, and Gln103.

The protein belongs to the methyltransferase superfamily. RsmH family.

The protein resides in the cytoplasm. It catalyses the reaction cytidine(1402) in 16S rRNA + S-adenosyl-L-methionine = N(4)-methylcytidine(1402) in 16S rRNA + S-adenosyl-L-homocysteine + H(+). In terms of biological role, specifically methylates the N4 position of cytidine in position 1402 (C1402) of 16S rRNA. This chain is Ribosomal RNA small subunit methyltransferase H, found in Rickettsia felis (strain ATCC VR-1525 / URRWXCal2) (Rickettsia azadi).